A 306-amino-acid polypeptide reads, in one-letter code: Oxygen-dependent coproporphyrinogen-III oxidase (306 aa).

Residue Ser-93 participates in substrate binding. The a divalent metal cation site is built by His-97 and His-107. His-107 (proton donor) is an active-site residue. 109–111 (NVR) is a binding site for substrate. Residues His-146 and His-176 each contribute to the a divalent metal cation site. Residues 241-276 (YVEYNLVYDRGTLFGLQSGGRTESILMSLPPQVAWG) form an important for dimerization region. 259–261 (GGR) contributes to the substrate binding site.

The protein belongs to the aerobic coproporphyrinogen-III oxidase family. In terms of assembly, homodimer. Requires a divalent metal cation as cofactor.

The protein resides in the cytoplasm. It carries out the reaction coproporphyrinogen III + O2 + 2 H(+) = protoporphyrinogen IX + 2 CO2 + 2 H2O. Its pathway is porphyrin-containing compound metabolism; protoporphyrin-IX biosynthesis; protoporphyrinogen-IX from coproporphyrinogen-III (O2 route): step 1/1. In terms of biological role, involved in the heme biosynthesis. Catalyzes the aerobic oxidative decarboxylation of propionate groups of rings A and B of coproporphyrinogen-III to yield the vinyl groups in protoporphyrinogen-IX. This is Oxygen-dependent coproporphyrinogen-III oxidase from Stutzerimonas stutzeri (strain A1501) (Pseudomonas stutzeri).